We begin with the raw amino-acid sequence, 503 residues long: Probable DNA ligase (503 aa).

Residue E210 participates in ATP binding. K212 (N6-AMP-lysine intermediate) is an active-site residue. Residues R217, R232, E261, F296, R367, and K373 each contribute to the ATP site.

Belongs to the ATP-dependent DNA ligase family. It depends on Mg(2+) as a cofactor.

The catalysed reaction is ATP + (deoxyribonucleotide)n-3'-hydroxyl + 5'-phospho-(deoxyribonucleotide)m = (deoxyribonucleotide)n+m + AMP + diphosphate.. DNA ligase that seals nicks in double-stranded DNA during DNA replication, DNA recombination and DNA repair. This chain is Probable DNA ligase, found in Rhodococcus jostii (strain RHA1).